The chain runs to 33 residues: Photosystem II reaction center protein T (33 aa).

A helical transmembrane segment spans residues 3–23 (ALVYTFLLVSTLGIIFFAIFF).

It belongs to the PsbT family. PSII is composed of 1 copy each of membrane proteins PsbA, PsbB, PsbC, PsbD, PsbE, PsbF, PsbH, PsbI, PsbJ, PsbK, PsbL, PsbM, PsbT, PsbY, PsbZ, Psb30/Ycf12, at least 3 peripheral proteins of the oxygen-evolving complex and a large number of cofactors. It forms dimeric complexes.

The protein resides in the plastid. It localises to the chloroplast thylakoid membrane. Its function is as follows. Found at the monomer-monomer interface of the photosystem II (PS II) dimer, plays a role in assembly and dimerization of PSII. PSII is a light-driven water plastoquinone oxidoreductase, using light energy to abstract electrons from H(2)O, generating a proton gradient subsequently used for ATP formation. The polypeptide is Photosystem II reaction center protein T (Arabidopsis thaliana (Mouse-ear cress)).